Consider the following 1462-residue polypeptide: Serine/threonine-protein kinase HSL1 (1462 aa).

Disordered regions lie at residues methionine 1–methionine 26 and arginine 41–arginine 69. The Protein kinase domain occupies tryptophan 65 to leucine 330. ATP is bound by residues leucine 71 to valine 79 and lysine 94. Aspartate 201 serves as the catalytic Proton acceptor. Disordered regions lie at residues serine 412–valine 450, serine 471–asparagine 540, glutamate 598–leucine 637, glutamate 992–phenylalanine 1031, lysine 1095–lysine 1230, and asparagine 1269–glutamate 1321. Polar residues-rich tracts occupy residues proline 428 to aspartate 440 and serine 471 to proline 487. Residues alanine 510–serine 526 are compositionally biased toward low complexity. The segment covering threonine 527–asparagine 540 has biased composition (polar residues). The span at glutamine 610–glutamate 620 shows a compositional bias: pro residues. Residues serine 636 to aspartate 715 adopt a coiled-coil conformation. Residues lysine 1095–aspartate 1130 are compositionally biased toward basic and acidic residues. Over residues asparagine 1131 to aspartate 1153 the composition is skewed to acidic residues. Composition is skewed to polar residues over residues histidine 1165–serine 1176, serine 1197–aspartate 1218, and asparagine 1292–lysine 1302.

Belongs to the protein kinase superfamily. CAMK Ser/Thr protein kinase family. NIM1 subfamily. Phosphorylated throughout the cell cycle, except for the G1 phase.

The protein localises to the bud neck. It carries out the reaction L-seryl-[protein] + ATP = O-phospho-L-seryl-[protein] + ADP + H(+). It catalyses the reaction L-threonyl-[protein] + ATP = O-phospho-L-threonyl-[protein] + ADP + H(+). Protein kinase involved in determination of morphology during the cell cycle of both yeast-form and hyphal cells via regulation of SWE1 and CDC28. Regulates pseudohypha formation, but is not required for septin ring organization or septum formation. Plays an essential role in virulence in a mouse model. The chain is Serine/threonine-protein kinase HSL1 (HSL1) from Candida albicans (strain SC5314 / ATCC MYA-2876) (Yeast).